The primary structure comprises 249 residues: MLSGLVSAIRTLTIFSVPGKDAENFSSSLYWFPVVGAFLGTLLAACAWLPLSIGWSELASAVVVVGGFIVSRGMHADGLADMADGFWGGGDRERTLSIMKDPTVGSFGALALLSLMLLKWVAILRLTEHGAFALIASGVLLGRLSQVLLAASLPYARKEGGTASGFVGGAGRTHAAVALALSLMMTLPFFYRDPFLLFLLFGAALTAAALIGFLSMKKIGGITGDVLGAVSEVTELFVWLAAGVAFTAF.

The next 7 membrane-spanning stretches (helical) occupy residues L29 to L49, P50 to V70, V104 to L124, A131 to A151, G165 to M185, P194 to L214, and V226 to F246.

The protein belongs to the CobS family. The cofactor is Mg(2+).

The protein resides in the cell inner membrane. The enzyme catalyses alpha-ribazole + adenosylcob(III)inamide-GDP = adenosylcob(III)alamin + GMP + H(+). It carries out the reaction alpha-ribazole 5'-phosphate + adenosylcob(III)inamide-GDP = adenosylcob(III)alamin 5'-phosphate + GMP + H(+). Its pathway is cofactor biosynthesis; adenosylcobalamin biosynthesis; adenosylcobalamin from cob(II)yrinate a,c-diamide: step 7/7. Its function is as follows. Joins adenosylcobinamide-GDP and alpha-ribazole to generate adenosylcobalamin (Ado-cobalamin). Also synthesizes adenosylcobalamin 5'-phosphate from adenosylcobinamide-GDP and alpha-ribazole 5'-phosphate. This Chlorobium phaeovibrioides (strain DSM 265 / 1930) (Prosthecochloris vibrioformis (strain DSM 265)) protein is Adenosylcobinamide-GDP ribazoletransferase.